Here is a 342-residue protein sequence, read N- to C-terminus: Gibberellin cluster GA4 desaturase (342 aa).

Residues 127–183 form a disordered region; that stretch reads PELAPPYPMPGKSSSGSKEREAIPANELPTTRAKGFQKGEEEGPVRKPHKDWGPSGA.

It belongs to the asaB hydroxylase/desaturase family.

It functions in the pathway plant hormone biosynthesis; gibberellin biosynthesis. Its function is as follows. GA4 desaturase; part of the gene cluster that mediates the biosynthesis of gibberellins (GAs), diterpenoids that may provide a selective advantage during infection of the preferred host plant, rice. Gibberellins (GAs) are diterpenoids and are synthesized via the mevalonate pathway. Biosynthesis of the major metabolite GA3 (gibberellic acid) from geranylgeranyl diphosphate (GGPP) requires 13 steps. The GGPP produced by the geranylgeranyl diphosphate synthase GGS2 is converted to ent-kaurene via ent-copalyldiphosphate in a two-step cyclization reaction performed by the bifunctional ent-copalyl diphosphate synthase/ent-kaurene synthase enzyme (CPS/KS). Ent-Kaurene is metabolized to GAs by a series of oxidation reactions catalyzed by cytochrome P450 monooxygenases. Cytochrome P450 monooxygenase P450-4 is an ent-kaurene oxidase that catalyzes the three oxidation steps between ent-kaurene and ent-kaurenoic acid. The highly multifunctional cytochrome P450 monooxygenase P450-1 then catalyzes four steps involving oxidation at two carbon atoms, in the main pathway from ent-kaurenoic acid to GA14 via GA12-aldehyde as well as producing kaurenolides and fujenoic acids as by-products. The cytochrome P450 monooxygenase P450-2 then converts GA14 to GA4 by removal of C-20. GA4 is further converted to GA7 by the GA4 desaturase DES via 1,2-desaturation before cytochrome P450 monooxygenase P450-3, a 13-hydroxylase, hydroxylates GA7 to GA3, the final product of the GA-biosynthetic pathway. This is Gibberellin cluster GA4 desaturase from Gibberella fujikuroi (strain CBS 195.34 / IMI 58289 / NRRL A-6831) (Bakanae and foot rot disease fungus).